The primary structure comprises 163 residues: Neurotrophin-3 (163 aa).

The first 3 residues, 1-3 (IQS), serve as a signal peptide directing secretion. A propeptide spanning residues 4-119 (TSMDQGILTE…VLNRTSRRKR (116 aa)) is cleaved from the precursor. Positions 35–61 (KQTARTKDGTQTTVKKSEAEADATASQ) are disordered. N-linked (GlcNAc...) asparagine glycosylation occurs at Asn112.

The protein belongs to the NGF-beta family.

The protein localises to the secreted. In terms of biological role, seems to promote the survival of visceral and proprioceptive sensory neurons. This chain is Neurotrophin-3 (NTF3), found in Corallus caninus (Emerald tree boa).